The sequence spans 295 residues: tRNA(Ile)-lysidine synthase (295 aa).

10–15 (SGGPDS) is an ATP binding site.

The protein belongs to the tRNA(Ile)-lysidine synthase family.

Its subcellular location is the cytoplasm. The enzyme catalyses cytidine(34) in tRNA(Ile2) + L-lysine + ATP = lysidine(34) in tRNA(Ile2) + AMP + diphosphate + H(+). Its function is as follows. Ligates lysine onto the cytidine present at position 34 of the AUA codon-specific tRNA(Ile) that contains the anticodon CAU, in an ATP-dependent manner. Cytidine is converted to lysidine, thus changing the amino acid specificity of the tRNA from methionine to isoleucine. The chain is tRNA(Ile)-lysidine synthase from Malacoplasma penetrans (strain HF-2) (Mycoplasma penetrans).